A 1163-amino-acid chain; its full sequence is Spike glycoprotein (1163 aa).

The N-terminal stretch at 1–18 is a signal peptide; sequence MLERSLLLATLLSALCSA. At 19 to 1096 the chain is on the extracellular side; sequence NLFGNNSYVY…LKTYIKWPWY (1078 aa). N-linked (GlcNAc...) asparagine; by host glycosylation is found at N23, N51, N74, N102, N139, N145, N164, N179, N213, N238, N248, N265, N272, N277, N307, N426, N448, N514, N531, N543, N580, N592, N670, and N677. Positions 770–875 are heptad repeat 1 (HR1); that stretch reads IPFATQLQAR…QVDRIITGRL (106 aa). A coiled-coil region spans residues 823–867; sequence QDVVNKQSSILTETMASLNKNFGAISSVLQDIYQQLDSIQADAQV. N-linked (GlcNAc...) asparagine; by host glycans are attached at residues N948, N961, N980, N1015, N1039, N1052, and N1075. Positions 1025 to 1106 are heptad repeat 2 (HR2); it reads NDDFDFDDEL…VWLAIAFLTI (82 aa). Residues 1056-1084 adopt a coiled-coil conformation; that stretch reads PILDIGSEIDRIQGVIQGLNDSLIDLETL. The chain crosses the membrane as a helical span at residues 1097-1117; sequence VWLAIAFLTIIFILVLCWIFF. The Cytoplasmic segment spans residues 1118 to 1163; that stretch reads MTGCCGCCCGCFGIIPLMSKCGKKSSYYTTFDNDVVYEQYRPKKSV. Residues 1160 to 1163 carry the Di-lysine motif motif; that stretch reads KKSV.

It belongs to the gammacoronaviruses spike protein family. Homotrimer; each monomer consists of a S1 and a S2 subunit. The resulting peplomers protrude from the virus surface as spikes. In terms of processing, specific enzymatic cleavages in vivo yield mature proteins. The precursor is processed into S1 and S2 by host cell furin or furin-like protease to yield the mature S1 and S2 proteins. The cleavage site between S1 and S2 requires the optimal sequence [KR]-X-[KR]-R. Additionally, a second cleavage leads to the release of a fusion peptide after viral attachment to host cell receptor.

The protein resides in the virion membrane. The protein localises to the host endoplasmic reticulum-Golgi intermediate compartment membrane. Its function is as follows. Attaches the virion to the host cell membrane by interacting with sialic acids, initiating the infection. Functionally, mediates fusion of the virion and cellular membranes by acting as a class I viral fusion protein. Under the current model, the protein has at least 3 conformational states: pre-fusion native state, pre-hairpin intermediate state, and post-fusion hairpin state. During viral and target cell membrane fusion, the coiled coil regions (heptad repeats) assume a trimer-of-hairpins structure, positioning the fusion peptide in close proximity to the C-terminal region of the ectodomain. The formation of this structure appears to drive apposition and subsequent fusion of viral and target cell membranes. In terms of biological role, acts as a viral fusion peptide after S2 cleavage occurring upon virus endocytosis. The polypeptide is Spike glycoprotein (Gallus gallus (Chicken)).